Consider the following 485-residue polypeptide: Glutamate--tRNA ligase (485 aa).

Positions 11–21 (PSPTGHLHIGN) match the 'HIGH' region motif. The 'KMSKS' region signature appears at 252-256 (KLSKR). ATP is bound at residue Lys255.

Belongs to the class-I aminoacyl-tRNA synthetase family. Glutamate--tRNA ligase type 1 subfamily. Monomer.

The protein localises to the cytoplasm. The catalysed reaction is tRNA(Glu) + L-glutamate + ATP = L-glutamyl-tRNA(Glu) + AMP + diphosphate. In terms of biological role, catalyzes the attachment of glutamate to tRNA(Glu) in a two-step reaction: glutamate is first activated by ATP to form Glu-AMP and then transferred to the acceptor end of tRNA(Glu). This is Glutamate--tRNA ligase from Bacillus mycoides (strain KBAB4) (Bacillus weihenstephanensis).